Here is a 462-residue protein sequence, read N- to C-terminus: Polygalacturonase (462 aa).

Positions 1-22 (MALTRLLLPISILWFCFYSSHT) are cleaved as a signal peptide. Asparagine 173 is a glycosylation site (N-linked (GlcNAc...) asparagine). Catalysis depends on aspartate 278, which acts as the Proton donor. Residues cysteine 280 and cysteine 297 are joined by a disulfide bond. The N-linked (GlcNAc...) asparagine glycan is linked to asparagine 294. Histidine 301 is an active-site residue. Asparagine 358 carries N-linked (GlcNAc...) asparagine glycosylation. Intrachain disulfides connect cysteine 407–cysteine 413 and cysteine 435–cysteine 460.

It belongs to the glycosyl hydrolase 28 family.

It localises to the secreted. The protein localises to the cell wall. It carries out the reaction (1,4-alpha-D-galacturonosyl)n+m + H2O = (1,4-alpha-D-galacturonosyl)n + (1,4-alpha-D-galacturonosyl)m.. Its function is as follows. Acts in concert with the pectinesterase, in the ripening process. Is involved in cell wall metabolism, specifically in polyuronide degradation. This chain is Polygalacturonase, found in Persea americana (Avocado).